The chain runs to 257 residues: Putative hydro-lyase Bcen2424_3550 (257 aa).

It belongs to the D-glutamate cyclase family.

The chain is Putative hydro-lyase Bcen2424_3550 from Burkholderia cenocepacia (strain HI2424).